The primary structure comprises 636 residues: Threonine--tRNA ligase (636 aa).

The TGS domain maps to 1–63 (MINITTSFPN…SKDGSVDPVT (63 aa)). The interval 244-535 (DHRKIAKDLG…LIEHYAGNIP (292 aa)) is catalytic. The Zn(2+) site is built by cysteine 335, histidine 386, and histidine 512.

This sequence belongs to the class-II aminoacyl-tRNA synthetase family. In terms of assembly, homodimer. Zn(2+) serves as cofactor.

The protein resides in the cytoplasm. It carries out the reaction tRNA(Thr) + L-threonine + ATP = L-threonyl-tRNA(Thr) + AMP + diphosphate + H(+). Its function is as follows. Catalyzes the attachment of threonine to tRNA(Thr) in a two-step reaction: L-threonine is first activated by ATP to form Thr-AMP and then transferred to the acceptor end of tRNA(Thr). Also edits incorrectly charged L-seryl-tRNA(Thr). The protein is Threonine--tRNA ligase of Anaplasma marginale (strain St. Maries).